The primary structure comprises 398 residues: Acetate kinase (398 aa).

N7 serves as a coordination point for Mg(2+). Residue K14 participates in ATP binding. R91 is a binding site for substrate. Residue D148 is the Proton donor/acceptor of the active site. Residues 208-212 (HLGNG), 283-285 (DSR), and 331-335 (GIGEN) contribute to the ATP site. Position 384 (E384) interacts with Mg(2+).

It belongs to the acetokinase family. Homodimer. Requires Mg(2+) as cofactor. Mn(2+) is required as a cofactor.

It localises to the cytoplasm. The enzyme catalyses acetate + ATP = acetyl phosphate + ADP. It participates in metabolic intermediate biosynthesis; acetyl-CoA biosynthesis; acetyl-CoA from acetate: step 1/2. Its function is as follows. Catalyzes the formation of acetyl phosphate from acetate and ATP. Can also catalyze the reverse reaction. In Halothermothrix orenii (strain H 168 / OCM 544 / DSM 9562), this protein is Acetate kinase.